Consider the following 124-residue polypeptide: UPF0102 protein tll1737 (124 aa).

Belongs to the UPF0102 family.

This chain is UPF0102 protein tll1737, found in Thermosynechococcus vestitus (strain NIES-2133 / IAM M-273 / BP-1).